The chain runs to 119 residues: Large ribosomal subunit protein bL17 (119 aa).

Belongs to the bacterial ribosomal protein bL17 family. Part of the 50S ribosomal subunit. Contacts protein L32.

This Psychrobacter arcticus (strain DSM 17307 / VKM B-2377 / 273-4) protein is Large ribosomal subunit protein bL17.